A 427-amino-acid chain; its full sequence is Glutamate-1-semialdehyde 2,1-aminomutase (427 aa).

An N6-(pyridoxal phosphate)lysine modification is found at lysine 265.

It belongs to the class-III pyridoxal-phosphate-dependent aminotransferase family. HemL subfamily. As to quaternary structure, homodimer. Pyridoxal 5'-phosphate is required as a cofactor.

The protein localises to the cytoplasm. It catalyses the reaction (S)-4-amino-5-oxopentanoate = 5-aminolevulinate. It participates in porphyrin-containing compound metabolism; protoporphyrin-IX biosynthesis; 5-aminolevulinate from L-glutamyl-tRNA(Glu): step 2/2. In Paraburkholderia phytofirmans (strain DSM 17436 / LMG 22146 / PsJN) (Burkholderia phytofirmans), this protein is Glutamate-1-semialdehyde 2,1-aminomutase.